A 450-amino-acid polypeptide reads, in one-letter code: Glucose-6-phosphate isomerase (450 aa).

E291 (proton donor) is an active-site residue. Residues H312 and K426 contribute to the active site.

The protein belongs to the GPI family.

The protein resides in the cytoplasm. The catalysed reaction is alpha-D-glucose 6-phosphate = beta-D-fructose 6-phosphate. It functions in the pathway carbohydrate biosynthesis; gluconeogenesis. It participates in carbohydrate degradation; glycolysis; D-glyceraldehyde 3-phosphate and glycerone phosphate from D-glucose: step 2/4. Functionally, catalyzes the reversible isomerization of glucose-6-phosphate to fructose-6-phosphate. This Clostridium botulinum (strain Loch Maree / Type A3) protein is Glucose-6-phosphate isomerase.